Here is a 320-residue protein sequence, read N- to C-terminus: Malate dehydrogenase (320 aa).

NAD(+)-binding positions include 10–15 (GAGQIG) and D34. Substrate is bound by residues R83 and R89. NAD(+) is bound by residues N96 and 119–121 (ITN). Substrate-binding residues include N121 and R152. Residue H176 is the Proton acceptor of the active site.

This sequence belongs to the LDH/MDH superfamily. MDH type 3 family.

It catalyses the reaction (S)-malate + NAD(+) = oxaloacetate + NADH + H(+). Catalyzes the reversible oxidation of malate to oxaloacetate. The chain is Malate dehydrogenase from Ruegeria pomeroyi (strain ATCC 700808 / DSM 15171 / DSS-3) (Silicibacter pomeroyi).